The chain runs to 174 residues: ATP synthase subunit d, mitochondrial (174 aa).

The residue at position 2 (Ser-2) is an N-acetylserine.

It belongs to the ATPase d subunit family. In terms of assembly, F-type ATPases have 2 components, CF(1) - the catalytic core - and CF(0) - the membrane proton channel. In yeast, the dimeric form of ATP synthase consists of 17 polypeptides: alpha, beta, gamma, delta, epsilon, 4 (B), 5 (OSCP), 6 (A), 8, 9 (C), d, E (Tim11), f, g, h, i/j and k.

Its subcellular location is the mitochondrion. The protein localises to the mitochondrion inner membrane. Mitochondrial membrane ATP synthase (F(1)F(0) ATP synthase or Complex V) produces ATP from ADP in the presence of a proton gradient across the membrane which is generated by electron transport complexes of the respiratory chain. F-type ATPases consist of two structural domains, F(1) - containing the extramembraneous catalytic core, and F(0) - containing the membrane proton channel, linked together by a central stalk and a peripheral stalk. During catalysis, ATP synthesis in the catalytic domain of F(1) is coupled via a rotary mechanism of the central stalk subunits to proton translocation. Part of the complex F(0) domain and the peripheric stalk, which acts as a stator to hold the catalytic alpha(3)beta(3) subcomplex and subunit a/ATP6 static relative to the rotary elements. This is ATP synthase subunit d, mitochondrial (ATP7) from Saccharomyces cerevisiae (strain ATCC 204508 / S288c) (Baker's yeast).